A 228-amino-acid polypeptide reads, in one-letter code: Protein crossbronx homolog (228 aa).

Residues 14 to 168 enclose the UBC core domain; the sequence is LQEYKILAEY…VEQCVEDSQR (155 aa).

This sequence belongs to the ubiquitin-conjugating enzyme family. FTS subfamily.

The chain is Protein crossbronx homolog from Anopheles gambiae (African malaria mosquito).